Here is a 1530-residue protein sequence, read N- to C-terminus: Brefeldin A resistance protein (1530 aa).

The span at 1–26 (MNQNSDTTHGQALGSTLNHTTEVTRI) shows a compositional bias: polar residues. Residues 1 to 100 (MNQNSDTTHG…SDDSSVDRLA (100 aa)) are disordered. N-linked (GlcNAc...) asparagine glycosylation occurs at Asn28. Residues 36-48 (SSSNVDESLDSSN) are compositionally biased toward low complexity. Basic and acidic residues predominate over residues 54–64 (KASHTNEEYRS). N-linked (GlcNAc...) asparagine glycosylation occurs at Asn67. Over residues 72–93 (PSSSNEPSPESSSNSDSSSSDD) the composition is skewed to low complexity. The ABC transporter 1 domain occupies 153–410 (KTFPDIFLQP…FLDMGFDCHP (258 aa)). 3 N-linked (GlcNAc...) asparagine glycosylation sites follow: Asn273, Asn334, and Asn450. Residues Ser486 and Ser489 each carry the phosphoserine modification. Thr491 carries the post-translational modification Phosphothreonine. Helical transmembrane passes span 539–559 (AYIG…GSIF), 575–595 (VLFF…ANMF), 620–640 (LIVD…VLYF), 649–669 (GGFW…SAFF), 684–704 (ALGG…IPNI), and 791–811 (LAII…ASET). Residues 843–864 (PLDLETGQDTQGGDVVKESPDN) form a disordered region. The ABC transporter 2 domain occupies 882–1125 (FSWRNLNYDI…LLNYFESHGA (244 aa)). 918 to 925 (GESGAGKT) contributes to the ATP binding site. N-linked (GlcNAc...) asparagine glycosylation is found at Asn1159 and Asn1175. Thr1186 bears the Phosphothreonine mark. A run of 6 helical transmembrane segments spans residues 1220–1240 (ILMS…FTFY), 1255–1275 (AVFM…PKFI), 1300–1320 (AIIV…LCWF), 1338–1358 (YAWL…QAVA), 1367–1387 (ASVV…VLQP), and 1392–1412 (VGFW…EGLL). Residues Asn1449 and Asn1460 are each glycosylated (N-linked (GlcNAc...) asparagine). The chain crosses the membrane as a helical span at residues 1492 to 1512 (GIFVGYVFFNIFAVLLLFYVF).

Belongs to the ABC transporter superfamily. ABCG family. PDR (TC 3.A.1.205) subfamily.

It is found in the membrane. In terms of biological role, confers hyper-resistance to brefeldin A (BFA), an inhibitor of intracellular protein transport. Could serve as an efflux pump of various antibiotics. The sequence is that of Brefeldin A resistance protein (bfr1) from Schizosaccharomyces pombe (strain 972 / ATCC 24843) (Fission yeast).